Consider the following 336-residue polypeptide: Sulfate/thiosulfate import ATP-binding protein CysA (336 aa).

In terms of domain architecture, ABC transporter spans 3 to 233 (ITIENVSKSF…PASPFVMSFI (231 aa)). 35–42 (GPSGSGKS) is an ATP binding site.

The protein belongs to the ABC transporter superfamily. Sulfate/tungstate importer (TC 3.A.1.6) family. In terms of assembly, the complex is composed of two ATP-binding proteins (CysA), two transmembrane proteins (CysT and CysW) and a solute-binding protein (CysP).

It localises to the cell inner membrane. The catalysed reaction is sulfate(out) + ATP + H2O = sulfate(in) + ADP + phosphate + H(+). The enzyme catalyses thiosulfate(out) + ATP + H2O = thiosulfate(in) + ADP + phosphate + H(+). In terms of biological role, part of the ABC transporter complex CysAWTP involved in sulfate/thiosulfate import. Responsible for energy coupling to the transport system. This Thermosynechococcus vestitus (strain NIES-2133 / IAM M-273 / BP-1) protein is Sulfate/thiosulfate import ATP-binding protein CysA.